Consider the following 109-residue polypeptide: MVSRKRNSVIYRFASLLLVLMLSACSALQGTPQPAPPVTDHPQEIRRDQTQGLQRIGSVSTMVRGSPDDALAEIKAKAVAAKADYYVVVMVDETIVTGQWYSQAILYRK.

Residues 1–24 (MVSRKRNSVIYRFASLLLVLMLSA) form the signal peptide. The N-palmitoyl cysteine moiety is linked to residue cysteine 25. Cysteine 25 carries S-diacylglycerol cysteine lipidation.

Belongs to the BhsA/McbA family.

It localises to the cell membrane. Involved in protection of biofilms against oxidative stress. The protein is Lipoprotein BsmA (bsmA) of Escherichia coli (strain K12).